Here is a 765-residue protein sequence, read N- to C-terminus: Leucine-rich repeat and calponin homology domain-containing protein 2 (765 aa).

Disordered stretches follow at residues 1-39 and 55-76; these read MAAS…GGGG and LFGQ…PQHT. LRR repeat units lie at residues 89–110, 112–133, 135–156, 158–179, 180–201, 203–224, 226–248, 249–269, and 271–292; these read SSGI…GYDL, DTTQ…VWLF, PLET…IKNL, MLTY…LFDL, PLKV…IGKL, DLME…MGKL, SLRE…GDLP, LVKL…YRKL, and HLQV…ICLK. Positions 316–401 are disordered; it reads LDLPSLSKRM…GSKTDSQKDQ (86 aa). Residues 378 to 388 are compositionally biased toward basic and acidic residues; the sequence is SNREQTSRNDS. Residues 438-472 are a coiled coil; that stretch reads SEKSRKNEELGDEKRLEKEQLLAEEEDDDLKEVTD. 2 disordered regions span residues 498–552 and 565–628; these read RNKP…QSEE and KYKS…EYGA. Residues 503-512 show a composition bias toward basic and acidic residues; it reads QTVECEKSVS. Composition is skewed to polar residues over residues 518–529 and 584–595; these read SPLSPLTWQPLE and DNANMSTQSPVS. In terms of domain architecture, Calponin-homology (CH) spans 642-755; sequence LREEREQIRQ…VTVQALLELP (114 aa).

In terms of biological role, may play a role in the organization of the cytoskeleton. This Homo sapiens (Human) protein is Leucine-rich repeat and calponin homology domain-containing protein 2 (LRCH2).